Reading from the N-terminus, the 88-residue chain is DNA-directed RNA polymerase subunit omega (88 aa).

The protein belongs to the RNA polymerase subunit omega family. In terms of assembly, the RNAP catalytic core consists of 2 alpha, 1 beta, 1 beta' and 1 omega subunit. When a sigma factor is associated with the core the holoenzyme is formed, which can initiate transcription.

It catalyses the reaction RNA(n) + a ribonucleoside 5'-triphosphate = RNA(n+1) + diphosphate. In terms of biological role, promotes RNA polymerase assembly. Latches the N- and C-terminal regions of the beta' subunit thereby facilitating its interaction with the beta and alpha subunits. This Clostridioides difficile (strain 630) (Peptoclostridium difficile) protein is DNA-directed RNA polymerase subunit omega.